We begin with the raw amino-acid sequence, 556 residues long: Oxygen-dependent choline dehydrogenase (556 aa).

6-35 is a binding site for FAD; it reads DYIIIGAGSAGNVLAARLTEDPGVTVLLLE. Catalysis depends on His-475, which acts as the Proton acceptor.

The protein belongs to the GMC oxidoreductase family. It depends on FAD as a cofactor.

The enzyme catalyses choline + A = betaine aldehyde + AH2. It catalyses the reaction betaine aldehyde + NAD(+) + H2O = glycine betaine + NADH + 2 H(+). It participates in amine and polyamine biosynthesis; betaine biosynthesis via choline pathway; betaine aldehyde from choline (cytochrome c reductase route): step 1/1. Functionally, involved in the biosynthesis of the osmoprotectant glycine betaine. Catalyzes the oxidation of choline to betaine aldehyde and betaine aldehyde to glycine betaine at the same rate. This chain is Oxygen-dependent choline dehydrogenase, found in Xanthomonas euvesicatoria pv. vesicatoria (strain 85-10) (Xanthomonas campestris pv. vesicatoria).